The primary structure comprises 52 residues: Ribosome biogenesis protein Nop10 (52 aa).

Belongs to the NOP10 family.

Functionally, involved in ribosome biogenesis; more specifically in 18S rRNA pseudouridylation and in cleavage of pre-rRNA. The sequence is that of Ribosome biogenesis protein Nop10 from Methanococcus vannielii (strain ATCC 35089 / DSM 1224 / JCM 13029 / OCM 148 / SB).